The primary structure comprises 232 residues: Phosphoribosylformylglycinamidine synthase subunit PurQ (232 aa).

The region spanning Lys2 to Phe232 is the Glutamine amidotransferase type-1 domain. The Nucleophile role is filled by Cys86. Residues His203 and Glu205 contribute to the active site.

As to quaternary structure, part of the FGAM synthase complex composed of 1 PurL, 1 PurQ and 2 PurS subunits.

It is found in the cytoplasm. It carries out the reaction N(2)-formyl-N(1)-(5-phospho-beta-D-ribosyl)glycinamide + L-glutamine + ATP + H2O = 2-formamido-N(1)-(5-O-phospho-beta-D-ribosyl)acetamidine + L-glutamate + ADP + phosphate + H(+). It catalyses the reaction L-glutamine + H2O = L-glutamate + NH4(+). Its pathway is purine metabolism; IMP biosynthesis via de novo pathway; 5-amino-1-(5-phospho-D-ribosyl)imidazole from N(2)-formyl-N(1)-(5-phospho-D-ribosyl)glycinamide: step 1/2. In terms of biological role, part of the phosphoribosylformylglycinamidine synthase complex involved in the purines biosynthetic pathway. Catalyzes the ATP-dependent conversion of formylglycinamide ribonucleotide (FGAR) and glutamine to yield formylglycinamidine ribonucleotide (FGAM) and glutamate. The FGAM synthase complex is composed of three subunits. PurQ produces an ammonia molecule by converting glutamine to glutamate. PurL transfers the ammonia molecule to FGAR to form FGAM in an ATP-dependent manner. PurS interacts with PurQ and PurL and is thought to assist in the transfer of the ammonia molecule from PurQ to PurL. This chain is Phosphoribosylformylglycinamidine synthase subunit PurQ, found in Methanosarcina mazei (strain ATCC BAA-159 / DSM 3647 / Goe1 / Go1 / JCM 11833 / OCM 88) (Methanosarcina frisia).